The primary structure comprises 245 residues: Ureidoacrylate amidohydrolase RutB (245 aa).

Residue Asp38 is the Proton acceptor of the active site. Residue Lys147 is part of the active site. Cys180 serves as the catalytic Nucleophile.

It belongs to the isochorismatase family. RutB subfamily.

It carries out the reaction (Z)-3-ureidoacrylate + H2O + H(+) = (Z)-3-aminoacrylate + NH4(+) + CO2. The enzyme catalyses (Z)-3-ureidoacrylate + H2O = (Z)-3-aminoacrylate + carbamate + H(+). It catalyses the reaction (Z)-2-methylureidoacrylate + H2O + H(+) = (Z)-2-methylaminoacrylate + NH4(+) + CO2. Hydrolyzes ureidoacrylate to form aminoacrylate and carbamate. The carbamate hydrolyzes spontaneously, thereby releasing one of the nitrogen atoms of the pyrimidine ring as ammonia and one of its carbon atoms as CO2. This chain is Ureidoacrylate amidohydrolase RutB, found in Acinetobacter baylyi (strain ATCC 33305 / BD413 / ADP1).